The chain runs to 169 residues: Transmembrane protein 89 (169 aa).

The signal sequence occupies residues 1–22; sequence MLYTLLLVPSLFLLVMPVPSQG. Residues 23–75 are Extracellular-facing; that stretch reads WSRPLWYQVGLDLQPWGCQPNSPDIWGCQPNSLDSCKNSLGCPGYWLGLGGNR. A helical membrane pass occupies residues 76–96; that stretch reads IYPVAGVTITTTMLLVVSRVI. Residues 97-169 are Cytoplasmic-facing; it reads VHRWRAKVAK…QIKGSPPQSG (73 aa).

Its subcellular location is the membrane. This is Transmembrane protein 89 (Tmem89) from Mus musculus (Mouse).